A 134-amino-acid chain; its full sequence is UPF0715 membrane protein YoaG (134 aa).

A run of 4 helical transmembrane segments spans residues 9–29 (LMTLGLSSLTFGLLLGFYSFV), 35–55 (IIALFTAAIALLYGFVVYGLF), 72–92 (VMYLLIYSVVAFIAAFLFFVI), and 106–126 (FYYMLSIAAAVIYWLWDSLIL).

The protein belongs to the UPF0715 family.

Its subcellular location is the cell membrane. The protein is UPF0715 membrane protein YoaG (yoaG) of Bacillus subtilis (strain 168).